We begin with the raw amino-acid sequence, 251 residues long: Pyrroloquinoline-quinone synthase (251 aa).

It belongs to the PqqC family.

It catalyses the reaction 6-(2-amino-2-carboxyethyl)-7,8-dioxo-1,2,3,4,7,8-hexahydroquinoline-2,4-dicarboxylate + 3 O2 = pyrroloquinoline quinone + 2 H2O2 + 2 H2O + H(+). Its pathway is cofactor biosynthesis; pyrroloquinoline quinone biosynthesis. In terms of biological role, ring cyclization and eight-electron oxidation of 3a-(2-amino-2-carboxyethyl)-4,5-dioxo-4,5,6,7,8,9-hexahydroquinoline-7,9-dicarboxylic-acid to PQQ. This Pseudomonas syringae pv. tomato (strain ATCC BAA-871 / DC3000) protein is Pyrroloquinoline-quinone synthase.